Reading from the N-terminus, the 488-residue chain is Coagulation factor X (488 aa).

The signal sequence occupies residues 1-31; that stretch reads MGRPLHLVLLSASLAGLLLLGESLFIRREQA. Positions 32 to 40 are excised as a propeptide; it reads NNILARVTR. A Gla domain is found at 41 to 85; it reads ANSFLEEMKKGHLERECMEETCSYEEAREVFEDSDKTNEFWNKYK. 4-carboxyglutamate is present on residues Glu46, Glu47, Glu54, Glu56, Glu59, Glu60, Glu65, Glu66, Glu69, Glu72, and Glu79. A disulfide bond links Cys57 and Cys62. In terms of domain architecture, EGF-like 1; calcium-binding spans 86–122; the sequence is DGDQCETSPCQNQGKCKDGLGEYTCTCLEGFEGKNCE. Intrachain disulfides connect Cys90–Cys101, Cys95–Cys110, Cys112–Cys121, Cys129–Cys140, Cys136–Cys149, Cys151–Cys164, Cys172–Cys342, Cys241–Cys246, Cys261–Cys277, Cys390–Cys404, and Cys415–Cys443. Position 103 is a (3R)-3-hydroxyaspartate (Asp103). In terms of domain architecture, EGF-like 2 spans 125–165; it reads TRKLCSLDNGDCDQFCHEEQNSVVCSCARGYTLADNGKACI. Residues 183 to 203 are O-glycosylated at one site; that stretch reads SVAQATSSSGEAPDSITWKPY. A propeptide spans 183–234 (activation peptide); the sequence is SVAQATSSSGEAPDSITWKPYDAADLDPTENPFDLLDFNQTQPERGDNNLTR. O-linked (GalNAc...) threonine glycosylation is found at Thr199 and Thr211. 2 N-linked (GlcNAc...) asparagine glycosylation sites follow: Asn221 and Asn231. One can recognise a Peptidase S1 domain in the interval 235–467; sequence IVGGQECKDG…FLKWIDRSMK (233 aa). Residues His276 and Asp322 each act as charge relay system in the active site. Ser419 functions as the Charge relay system in the catalytic mechanism. Positions 476-485 are O-glycosylated at one site; that stretch reads SHAPEVITSS.

This sequence belongs to the peptidase S1 family. The two chains are formed from a single-chain precursor by the excision of two Arg residues and are held together by 1 or more disulfide bonds. Forms a heterodimer with SERPINA5. Interacts (inactive and activated) with ixolaris, an anticoagulant protein from Ixodes scapularis saliva. Interacts (activated) with iripin-8, a serine protease inhibitor from Ixodes ricinus saliva. Interacts (activated) with FXa-directed anticoagulant from Aedes albopictus saliva. Interacts (activated) with guianensin, an anticoagulant protein from Simulium guianense saliva. Interacts (activated) with simukunin, an anticoagulant protein from Simulium vittatum saliva. In terms of processing, the vitamin K-dependent, enzymatic carboxylation of some glutamate residues allows the modified protein to bind calcium. Post-translationally, N- and O-glycosylated. O-glycosylated with core 1 or possibly core 8 glycans. Proteolytically cleaved and activated by cathepsin CTSG. The activation peptide is cleaved by factor IXa (in the intrinsic pathway), or by factor VIIa (in the extrinsic pathway). In terms of processing, the iron and 2-oxoglutarate dependent 3-hydroxylation of aspartate and asparagine is (R) stereospecific within EGF domains. In terms of tissue distribution, plasma; synthesized in the liver.

It is found in the secreted. The enzyme catalyses Selective cleavage of Arg-|-Thr and then Arg-|-Ile bonds in prothrombin to form thrombin.. With respect to regulation, inhibited by SERPINA5 and SERPINA10. Its function is as follows. Factor Xa is a vitamin K-dependent glycoprotein that converts prothrombin to thrombin in the presence of factor Va, calcium and phospholipid during blood clotting. Factor Xa activates pro-inflammatory signaling pathways in a protease-activated receptor (PAR)-dependent manner. Up-regulates expression of protease-activated receptors (PARs) F2R, F2RL1 and F2RL2 in dermal microvascular endothelial cells. Triggers the production of pro-inflammatory cytokines, such as MCP-1/CCL2 and IL6, in cardiac fibroblasts and umbilical vein endothelial cells in PAR-1/F2R-dependent manner. Triggers the production of pro-inflammatory cytokines, such as MCP-1/CCL2, IL6, TNF-alpha/TNF, IL-1beta/IL1B, IL8/CXCL8 and IL18, in endothelial cells and atrial tissues. Induces expression of adhesion molecules, such as ICAM1, VCAM1 and SELE, in endothelial cells and atrial tissues. Increases expression of phosphorylated ERK1/2 in dermal microvascular endothelial cells and atrial tissues. Triggers activation of the transcription factor NF-kappa-B in dermal microvascular endothelial cells and atrial tissues. Activates pro-inflammatory and pro-fibrotic responses in dermal fibroblasts and enhances wound healing probably via PAR-2/F2RL1-dependent mechanism. Activates barrier protective signaling responses in endothelial cells in PAR-2/F2RL1-dependent manner; the activity depends on the cleavage of PAR-2/F2RL1 by factor Xa. Up-regulates expression of plasminogen activator inhibitor 1 (SERPINE1) in atrial tissues. This is Coagulation factor X (F10) from Homo sapiens (Human).